The primary structure comprises 119 residues: Holo-[acyl-carrier-protein] synthase (119 aa).

The Mg(2+) site is built by D8 and E59.

This sequence belongs to the P-Pant transferase superfamily. AcpS family. The cofactor is Mg(2+).

It is found in the cytoplasm. The enzyme catalyses apo-[ACP] + CoA = holo-[ACP] + adenosine 3',5'-bisphosphate + H(+). Transfers the 4'-phosphopantetheine moiety from coenzyme A to a Ser of acyl-carrier-protein. This chain is Holo-[acyl-carrier-protein] synthase, found in Staphylococcus aureus (strain JH1).